Consider the following 144-residue polypeptide: AP-4 complex subunit sigma-1 (144 aa).

It belongs to the adaptor complexes small subunit family. In terms of assembly, adaptor protein complex 4 (AP-4) is a heterotetramer composed of two large adaptins (epsilon-type subunit AP4E1 and beta-type subunit AP4B1), a medium adaptin (mu-type subunit AP4M1) and a small adaptin (sigma-type AP4S1). Widely expressed.

It is found in the golgi apparatus. The protein resides in the trans-Golgi network membrane. Its function is as follows. Component of the adaptor protein complex 4 (AP-4). Adaptor protein complexes are vesicle coat components involved both in vesicle formation and cargo selection. They control the vesicular transport of proteins in different trafficking pathways. AP-4 forms a non clathrin-associated coat on vesicles departing the trans-Golgi network (TGN) and may be involved in the targeting of proteins from the trans-Golgi network (TGN) to the endosomal-lysosomal system. It is also involved in protein sorting to the basolateral membrane in epithelial cells and the proper asymmetric localization of somatodendritic proteins in neurons. AP-4 is involved in the recognition and binding of tyrosine-based sorting signals found in the cytoplasmic part of cargos, but may also recognize other types of sorting signal. The chain is AP-4 complex subunit sigma-1 from Homo sapiens (Human).